Consider the following 428-residue polypeptide: Enolase (428 aa).

Position 163 (glutamine 163) interacts with (2R)-2-phosphoglycerate. The Proton donor role is filled by glutamate 205. The Mg(2+) site is built by aspartate 242, glutamate 286, and aspartate 313. (2R)-2-phosphoglycerate is bound by residues lysine 338, arginine 367, serine 368, and lysine 389. The active-site Proton acceptor is lysine 338.

Belongs to the enolase family. The cofactor is Mg(2+).

Its subcellular location is the cytoplasm. It localises to the secreted. It is found in the cell surface. It carries out the reaction (2R)-2-phosphoglycerate = phosphoenolpyruvate + H2O. The protein operates within carbohydrate degradation; glycolysis; pyruvate from D-glyceraldehyde 3-phosphate: step 4/5. Its function is as follows. Catalyzes the reversible conversion of 2-phosphoglycerate (2-PG) into phosphoenolpyruvate (PEP). It is essential for the degradation of carbohydrates via glycolysis. This chain is Enolase, found in Bordetella bronchiseptica (strain ATCC BAA-588 / NCTC 13252 / RB50) (Alcaligenes bronchisepticus).